Here is a 306-residue protein sequence, read N- to C-terminus: uncharacterized protein (306 aa).

8 consecutive transmembrane segments (helical) span residues leucine 7 to alanine 27, valine 30 to leucine 50, leucine 68 to leucine 88, alanine 95 to isoleucine 115, alanine 144 to phenylalanine 164, isoleucine 194 to valine 214, isoleucine 232 to phenylalanine 252, and threonine 274 to proline 294.

It localises to the cell membrane. This is an uncharacterized protein from Mycoplasma genitalium (strain ATCC 33530 / DSM 19775 / NCTC 10195 / G37) (Mycoplasmoides genitalium).